We begin with the raw amino-acid sequence, 121 residues long: Basic phospholipase A2 3 (121 aa).

Cystine bridges form between Cys-26–Cys-115, Cys-28–Cys-44, Cys-43–Cys-95, Cys-49–Cys-121, Cys-50–Cys-88, Cys-57–Cys-81, and Cys-75–Cys-86. Ca(2+) contacts are provided by Tyr-27, Gly-29, and Gly-31. His-47 is a catalytic residue. Asp-48 serves as a coordination point for Ca(2+). Asp-89 is a catalytic residue.

Belongs to the phospholipase A2 family. Group II subfamily. D49 sub-subfamily. It depends on Ca(2+) as a cofactor. As to expression, expressed by the venom gland.

The protein localises to the secreted. The enzyme catalyses a 1,2-diacyl-sn-glycero-3-phosphocholine + H2O = a 1-acyl-sn-glycero-3-phosphocholine + a fatty acid + H(+). Functionally, PLA2 catalyzes the calcium-dependent hydrolysis of the 2-acyl groups in 3-sn-phosphoglycerides. This is Basic phospholipase A2 3 from Daboia russelii (Russel's viper).